The chain runs to 166 residues: ATP synthase subunit b 1 (166 aa).

A helical transmembrane segment spans residues phenylalanine 7–threonine 29.

This sequence belongs to the ATPase B chain family. In terms of assembly, F-type ATPases have 2 components, F(1) - the catalytic core - and F(0) - the membrane proton channel. F(1) has five subunits: alpha(3), beta(3), gamma(1), delta(1), epsilon(1). F(0) has three main subunits: a(1), b(2) and c(10-14). The alpha and beta chains form an alternating ring which encloses part of the gamma chain. F(1) is attached to F(0) by a central stalk formed by the gamma and epsilon chains, while a peripheral stalk is formed by the delta and b chains.

The protein localises to the cell inner membrane. Functionally, f(1)F(0) ATP synthase produces ATP from ADP in the presence of a proton or sodium gradient. F-type ATPases consist of two structural domains, F(1) containing the extramembraneous catalytic core and F(0) containing the membrane proton channel, linked together by a central stalk and a peripheral stalk. During catalysis, ATP synthesis in the catalytic domain of F(1) is coupled via a rotary mechanism of the central stalk subunits to proton translocation. Its function is as follows. Component of the F(0) channel, it forms part of the peripheral stalk, linking F(1) to F(0). The sequence is that of ATP synthase subunit b 1 from Gluconobacter oxydans (strain 621H) (Gluconobacter suboxydans).